Here is a 138-residue protein sequence, read N- to C-terminus: Acidic phospholipase A2 DsM-a2/DsM-a2' (138 aa).

An N-terminal signal peptide occupies residues 1-16 (MRTLWIVAVCLIGVEG). Intrachain disulfides connect Cys42-Cys131, Cys44-Cys60, Cys59-Cys111, Cys65-Cys138, Cys66-Cys104, Cys73-Cys97, and Cys91-Cys102. 3 residues coordinate Ca(2+): Tyr43, Gly45, and Gly47. The active site involves His63. Asp64 contributes to the Ca(2+) binding site. Residue Asp105 is part of the active site.

Belongs to the phospholipase A2 family. Group II subfamily. D49 sub-subfamily. Ca(2+) is required as a cofactor. Expressed by the venom gland.

Its subcellular location is the secreted. The enzyme catalyses a 1,2-diacyl-sn-glycero-3-phosphocholine + H2O = a 1-acyl-sn-glycero-3-phosphocholine + a fatty acid + H(+). In terms of biological role, exhibits high hydrolytic activities and shows strong preference for the anionic micelles (dPPC with deoxycholate) to the zwitterionic micelles (dPPC with Triton X-100). PLA2 catalyzes the calcium-dependent hydrolysis of the 2-acyl groups in 3-sn-phosphoglycerides. The polypeptide is Acidic phospholipase A2 DsM-a2/DsM-a2' (Daboia siamensis (Eastern Russel's viper)).